We begin with the raw amino-acid sequence, 383 residues long: Deoxyguanosinetriphosphate triphosphohydrolase-like protein (383 aa).

The HD domain maps to 62 to 198 (RLTHSLEVST…AALADDISYI (137 aa)).

This sequence belongs to the dGTPase family. Type 2 subfamily.

This is Deoxyguanosinetriphosphate triphosphohydrolase-like protein from Rickettsia bellii (strain RML369-C).